The sequence spans 360 residues: Photosystem II protein D1 (360 aa).

Helical transmembrane passes span 29–46 (YIGW…TATC), 118–133 (HFLI…EWEL), and 142–156 (WICV…AATA). Position 118 (histidine 118) interacts with chlorophyll a. Tyrosine 126 provides a ligand contact to pheophytin a. Aspartate 170 and glutamate 189 together coordinate [CaMn4O5] cluster. Residues 197–218 (FHMAGVAGVFGGALFSAMHGSL) form a helical membrane-spanning segment. Histidine 198 contacts chlorophyll a. A quinone contacts are provided by residues histidine 215 and 264 to 265 (SF). Histidine 215 is a binding site for Fe cation. Histidine 272 is a Fe cation binding site. A helical transmembrane segment spans residues 274–288 (FLGAWPVVGIWLTAI). [CaMn4O5] cluster is bound by residues histidine 332, glutamate 333, aspartate 342, and alanine 344. A propeptide spanning residues 345–360 (SNSVVPVALTAPSVEA) is cleaved from the precursor.

The protein belongs to the reaction center PufL/M/PsbA/D family. As to quaternary structure, PSII is composed of 1 copy each of membrane proteins PsbA, PsbB, PsbC, PsbD, PsbE, PsbF, PsbH, PsbI, PsbJ, PsbK, PsbL, PsbM, PsbT, PsbX, PsbY, PsbZ, Psb30/Ycf12, at least 3 peripheral proteins of the oxygen-evolving complex and a large number of cofactors. It forms dimeric complexes. The cofactor is The D1/D2 heterodimer binds P680, chlorophylls that are the primary electron donor of PSII, and subsequent electron acceptors. It shares a non-heme iron and each subunit binds pheophytin, quinone, additional chlorophylls, carotenoids and lipids. D1 provides most of the ligands for the Mn4-Ca-O5 cluster of the oxygen-evolving complex (OEC). There is also a Cl(-1) ion associated with D1 and D2, which is required for oxygen evolution. The PSII complex binds additional chlorophylls, carotenoids and specific lipids.. Post-translationally, tyr-161 forms a radical intermediate that is referred to as redox-active TyrZ, YZ or Y-Z. In terms of processing, C-terminally processed by CTPA; processing is essential to allow assembly of the oxygen-evolving complex and thus photosynthetic growth.

Its subcellular location is the plastid. It is found in the chloroplast thylakoid membrane. It carries out the reaction 2 a plastoquinone + 4 hnu + 2 H2O = 2 a plastoquinol + O2. In terms of biological role, photosystem II (PSII) is a light-driven water:plastoquinone oxidoreductase that uses light energy to abstract electrons from H(2)O, generating O(2) and a proton gradient subsequently used for ATP formation. It consists of a core antenna complex that captures photons, and an electron transfer chain that converts photonic excitation into a charge separation. The D1/D2 (PsbA/PsbD) reaction center heterodimer binds P680, the primary electron donor of PSII as well as several subsequent electron acceptors. In Cyanidioschyzon merolae (strain NIES-3377 / 10D) (Unicellular red alga), this protein is Photosystem II protein D1.